A 250-amino-acid polypeptide reads, in one-letter code: Triosephosphate isomerase (250 aa).

9 to 11 (NWK) contributes to the substrate binding site. Catalysis depends on H96, which acts as the Electrophile. Residue E168 is the Proton acceptor of the active site. Substrate contacts are provided by residues G174, S216, and 237-238 (GG).

It belongs to the triosephosphate isomerase family. Homodimer.

Its subcellular location is the cytoplasm. The catalysed reaction is D-glyceraldehyde 3-phosphate = dihydroxyacetone phosphate. It functions in the pathway carbohydrate biosynthesis; gluconeogenesis. The protein operates within carbohydrate degradation; glycolysis; D-glyceraldehyde 3-phosphate from glycerone phosphate: step 1/1. Functionally, involved in the gluconeogenesis. Catalyzes stereospecifically the conversion of dihydroxyacetone phosphate (DHAP) to D-glyceraldehyde-3-phosphate (G3P). The polypeptide is Triosephosphate isomerase (Leptospira interrogans serogroup Icterohaemorrhagiae serovar Lai (strain 56601)).